Here is a 38-residue protein sequence, read N- to C-terminus: uncharacterized protein (38 aa).

Belongs to the asfivirus C84L family.

This is an uncharacterized protein from Ornithodoros (relapsing fever ticks).